Consider the following 349-residue polypeptide: Protein-glutamate methylesterase/protein-glutamine glutaminase (349 aa).

Residues 5–122 (RVLSVDDSAL…REGMLAYNEM (118 aa)) form the Response regulatory domain. Position 56 is a 4-aspartylphosphate (aspartate 56). In terms of domain architecture, CheB-type methylesterase spans 152-344 (LLSSEKLIAI…QQMLAKISAG (193 aa)). Catalysis depends on residues serine 164, histidine 190, and aspartate 286.

Belongs to the CheB family. Interacts with CheA. Binds to a C-terminal pentapeptide sequence carried by certain receptors. Post-translationally, phosphorylated by CheA. Phosphorylation of the N-terminal regulatory domain activates the methylesterase activity.

It is found in the cytoplasm. The enzyme catalyses [protein]-L-glutamate 5-O-methyl ester + H2O = L-glutamyl-[protein] + methanol + H(+). It carries out the reaction L-glutaminyl-[protein] + H2O = L-glutamyl-[protein] + NH4(+). With respect to regulation, methylesterase activity is activated via phosphorylation in response to negative chemotactic stimuli and is inhibited in the presence of attractants. Activation requires both CheA and CheW. Involved in chemotaxis. Part of a chemotaxis signal transduction system that modulates chemotaxis in response to various stimuli. Catalyzes the demethylation of specific methylglutamate residues introduced into the chemoreceptors (methyl-accepting chemotaxis proteins or MCP) by CheR. Also mediates the irreversible deamidation of specific glutamine residues to glutamic acid. Catalyzes its own deactivation by removing the activating phosphoryl group. The polypeptide is Protein-glutamate methylesterase/protein-glutamine glutaminase (Escherichia coli (strain K12)).